The following is a 415-amino-acid chain: Adipocyte plasma membrane-associated protein (415 aa).

The tract at residues 1–29 is disordered; it reads MSEADGLRQRRPLRPQVVTDDGQVPEVKE. Serine 2 bears the N-acetylserine mark. Topologically, residues 2–39 are cytoplasmic; sequence SEADGLRQRRPLRPQVVTDDGQVPEVKEGSSFSGRVFR. Threonine 19 is modified (phosphothreonine). A helical; Signal-anchor for type II membrane protein transmembrane segment spans residues 40–60; it reads MTFLMLAVSLAIPLLGAMMLL. The Extracellular portion of the chain corresponds to 61–415; that stretch reads ESPIDPQSFS…FICRLSLQSI (355 aa). N-linked (GlcNAc...) asparagine glycosylation occurs at asparagine 159.

Belongs to the strictosidine synthase family. In terms of processing, glycosylated in vitro. In terms of tissue distribution, strongly expressed in adipose tissue. Highly expressed in liver, heart, and kidney. Expressed at intermediate level in brain and lung. Weakly expressed in spleen, skeletal muscle and testis.

The protein resides in the membrane. Exhibits strong arylesterase activity with beta-naphthyl acetate and phenyl acetate. May play a role in adipocyte differentiation. In Mus musculus (Mouse), this protein is Adipocyte plasma membrane-associated protein (Apmap).